The following is a 247-amino-acid chain: NH(3)-dependent NAD(+) synthetase (247 aa).

Position 29 to 36 (29 to 36 (GLSGGVDS)) interacts with ATP. Asp35 lines the Mg(2+) pocket. Arg112 contributes to the deamido-NAD(+) binding site. Thr132 lines the ATP pocket. Glu137 contacts Mg(2+). Lys145 and Asp152 together coordinate deamido-NAD(+). ATP contacts are provided by Lys161 and Ser183. Residue 233 to 234 (HK) participates in deamido-NAD(+) binding.

The protein belongs to the NAD synthetase family. As to quaternary structure, homodimer.

The enzyme catalyses deamido-NAD(+) + NH4(+) + ATP = AMP + diphosphate + NAD(+) + H(+). It functions in the pathway cofactor biosynthesis; NAD(+) biosynthesis; NAD(+) from deamido-NAD(+) (ammonia route): step 1/1. Its function is as follows. Catalyzes the ATP-dependent amidation of deamido-NAD to form NAD. Uses ammonia as a nitrogen source. The protein is NH(3)-dependent NAD(+) synthetase of Archaeoglobus fulgidus (strain ATCC 49558 / DSM 4304 / JCM 9628 / NBRC 100126 / VC-16).